We begin with the raw amino-acid sequence, 249 residues long: Acidic leucine-rich nuclear phosphoprotein 32 family member A (249 aa).

Phosphothreonine is present on T15. Phosphoserine is present on S17. LRR repeat units lie at residues 18–38 (DVKE…EGLT), 43–64 (ELEF…PKLN), 65–87 (KLKK…AEKC), and 89–110 (NLTH…EPLK). Residues 123–161 (CEVTNLNDYRENVFKLLPQLTYLDGYDRDDKEAPDSDAE) form the LRRCT domain. Basic and acidic residues predominate over residues 147–156 (GYDRDDKEAP). The disordered stretch occupies residues 147–249 (GYDRDDKEAP…EPEDEGEDDD (103 aa)). Residues 150 to 174 (RDDKEAPDSDAEGYVEGLDDEEEDE) form a necessary for tumor-suppressive function region. Positions 157 to 230 (DSDAEGYVEG…DEEDEEELGE (74 aa)) are enriched in acidic residues. 2 positions are modified to phosphoserine; by CK2: S158 and S204. Positions 165–249 (EGLDDEEEDE…EPEDEGEDDD (85 aa)) are interaction with E4F1.

This sequence belongs to the ANP32 family. As to quaternary structure, component of the SET complex, composed of at least ANP32A, APEX1, HMGB2, NME1, SET and TREX1. Directly interacts with SET. Interacts with ATXN1/SCA1. Interacts with MAP1B. Interacts with ELAVL1. Part of the INHAT (inhibitor of histone acetyltransferases) complex. Interacts with E4F1. (Microbial infection) Interacts (via C-terminus) with influenza virus A protein PB2; this interaction promotes viral replication. In terms of assembly, (Microbial infection) Interacts (via C-terminus) with influenza virus B protein PB2; this interaction promotes viral replication. As to quaternary structure, (Microbial infection) Interacts (via C-terminus) with influenza virus C protein PB2; this interaction promotes viral replication by bridging viral replicase dimers together. Post-translationally, phosphorylated on serine residues, at least in part by casein kinase 2/CK2. In terms of processing, the N-terminus is blocked. Some glutamate residues are glycylated by TTLL8. This modification occurs exclusively on glutamate residues and results in a glycine chain on the gamma-carboxyl group. In terms of tissue distribution, expressed in all tissues tested. Highly expressed in kidney and skeletal muscle, moderate levels of expression in brain, placenta and pancreas, and weakly expressed in lung. Found in all regions of the brain examined (amygdala, caudate nucleus, corpus callosum, hippocampus and thalamus), with highest levels in amygdala.

The protein localises to the nucleus. It is found in the cytoplasm. The protein resides in the endoplasmic reticulum. Multifunctional protein that is involved in the regulation of many processes including tumor suppression, apoptosis, cell cycle progression or transcription. Promotes apoptosis by favouring the activation of caspase-9/CASP9 and allowing apoptosome formation. In addition, plays a role in the modulation of histone acetylation and transcription as part of the INHAT (inhibitor of histone acetyltransferases) complex. Inhibits the histone-acetyltranferase activity of EP300/CREBBP (CREB-binding protein) and EP300/CREBBP-associated factor by histone masking. Preferentially binds to unmodified histone H3 and sterically inhibiting its acetylation and phosphorylation leading to cell growth inhibition. Participates in other biochemical processes such as regulation of mRNA nuclear-to-cytoplasmic translocation and stability by its association with ELAVL1 (Hu-antigen R). Plays a role in E4F1-mediated transcriptional repression as well as inhibition of protein phosphatase 2A. Its function is as follows. (Microbial infection) Plays an essential role in influenza A, B and C viral genome replication. Mechanistically, mediates the assembly of the viral replicase asymmetric dimers composed of PB1, PB2 and PA via its N-terminal region. Also plays an essential role in foamy virus mRNA export from the nucleus. The chain is Acidic leucine-rich nuclear phosphoprotein 32 family member A (ANP32A) from Homo sapiens (Human).